We begin with the raw amino-acid sequence, 161 residues long: 18.1 kDa class I heat shock protein (161 aa).

One can recognise a sHSP domain in the interval 45–160 (DVAAFTNARV…QVKSIDISGA (116 aa)).

Belongs to the small heat shock protein (HSP20) family. As to quaternary structure, may form oligomeric structures. Binds to AKR2A.

Its subcellular location is the cytoplasm. This chain is 18.1 kDa class I heat shock protein (HSP18.1), found in Arabidopsis thaliana (Mouse-ear cress).